A 117-amino-acid polypeptide reads, in one-letter code: Protein OPG035 (117 aa).

Belongs to the poxviridae OPG035 family.

Its function is as follows. Bcl-2-like protein which contributes to virulence by preventing host NF-kappa-B activation in response to pro-inflammatory stimuli such as TNF-alpha or IL1B. This is Protein OPG035 (OPG035) from Homo sapiens (Human).